Here is an 839-residue protein sequence, read N- to C-terminus: Phosphatidylinositol-glycan-specific phospholipase D (839 aa).

The first 23 residues, 1–23 (MSAFRFWSGLLMLLGFLCPRSSP), serve as a signal peptide directing secretion. 5 N-linked (GlcNAc...) asparagine glycosylation sites follow: Asn94, Asn271, Asn292, Asn307, and Asn321. FG-GAP repeat units follow at residues 365–427 (SSPA…GLPR), 434–496 (KEAH…GQLS), 498–558 (SPNV…YSSR), 562–622 (NVEA…SPGR), 632–692 (QSWF…GSTR), 703–769 (SLLS…TVGD), and 787–839 (QYVL…LGQD). 3 N-linked (GlcNAc...) asparagine glycosylation sites follow: Asn500, Asn590, and Asn658.

It belongs to the GPLD1 family. Monomer. Glycosylated.

The protein resides in the secreted. The catalysed reaction is a 6-(alpha-D-glucosaminyl)-1-(1,2-diacyl-sn-glycero-3-phospho)-1D-myo-inositol + H2O = 6-(alpha-D-glucosaminyl)-1D-myo-inositol + a 1,2-diacyl-sn-glycero-3-phosphate + H(+). In terms of biological role, this protein hydrolyzes the inositol phosphate linkage in proteins anchored by phosphatidylinositol glycans (GPI-anchor) thus releasing these proteins from the membrane. The sequence is that of Phosphatidylinositol-glycan-specific phospholipase D (GPLD1) from Bos taurus (Bovine).